Consider the following 201-residue polypeptide: Holliday junction branch migration complex subunit RuvA (201 aa).

Residues 1–61 are domain I; sequence MIEFVKGTID…EDAFSLYGFS (61 aa). The domain II stretch occupies residues 62-140; it reads TREEKALFTK…DVVPEMIDNL (79 aa). The flexible linker stretch occupies residues 141-150; it reads FNHEARIEKQ. A domain III region spans residues 151 to 201; sequence EAETALDEALEALRVLGYAEKEIKKVLPHLKEETALSTDQYVKKALQKLLK.

The protein belongs to the RuvA family. In terms of assembly, homotetramer. Forms an RuvA(8)-RuvB(12)-Holliday junction (HJ) complex. HJ DNA is sandwiched between 2 RuvA tetramers; dsDNA enters through RuvA and exits via RuvB. An RuvB hexamer assembles on each DNA strand where it exits the tetramer. Each RuvB hexamer is contacted by two RuvA subunits (via domain III) on 2 adjacent RuvB subunits; this complex drives branch migration. In the full resolvosome a probable DNA-RuvA(4)-RuvB(12)-RuvC(2) complex forms which resolves the HJ.

The protein localises to the cytoplasm. Its function is as follows. The RuvA-RuvB-RuvC complex processes Holliday junction (HJ) DNA during genetic recombination and DNA repair, while the RuvA-RuvB complex plays an important role in the rescue of blocked DNA replication forks via replication fork reversal (RFR). RuvA specifically binds to HJ cruciform DNA, conferring on it an open structure. The RuvB hexamer acts as an ATP-dependent pump, pulling dsDNA into and through the RuvAB complex. HJ branch migration allows RuvC to scan DNA until it finds its consensus sequence, where it cleaves and resolves the cruciform DNA. This is Holliday junction branch migration complex subunit RuvA from Bacillus velezensis (strain DSM 23117 / BGSC 10A6 / LMG 26770 / FZB42) (Bacillus amyloliquefaciens subsp. plantarum).